The chain runs to 297 residues: Protease HtpX homolog (297 aa).

2 helical membrane-spanning segments follow: residues 14-34 and 38-58; these read IVLL…VGYL and SLET…IIMV. H144 is a Zn(2+) binding site. E145 is a catalytic residue. H148 lines the Zn(2+) pocket. A run of 2 helical transmembrane segments spans residues 159–179 and 199–219; these read IALA…NWWF and ILLL…AAAI. E228 is a Zn(2+) binding site.

This sequence belongs to the peptidase M48B family. Zn(2+) is required as a cofactor.

Its subcellular location is the cell membrane. This chain is Protease HtpX homolog, found in Leuconostoc mesenteroides subsp. mesenteroides (strain ATCC 8293 / DSM 20343 / BCRC 11652 / CCM 1803 / JCM 6124 / NCDO 523 / NBRC 100496 / NCIMB 8023 / NCTC 12954 / NRRL B-1118 / 37Y).